The chain runs to 283 residues: Formamidopyrimidine-DNA glycosylase (283 aa).

Residue Pro-2 is the Schiff-base intermediate with DNA of the active site. Catalysis depends on Glu-3, which acts as the Proton donor. The active-site Proton donor; for beta-elimination activity is the Lys-58. DNA contacts are provided by His-100, Arg-119, and Arg-162. An FPG-type zinc finger spans residues 247–283 (RVYGREGLPCVTPGCSGTVGRIVQSGRSSFHCPLCQR). Arg-273 acts as the Proton donor; for delta-elimination activity in catalysis.

It belongs to the FPG family. As to quaternary structure, monomer. Requires Zn(2+) as cofactor.

The enzyme catalyses Hydrolysis of DNA containing ring-opened 7-methylguanine residues, releasing 2,6-diamino-4-hydroxy-5-(N-methyl)formamidopyrimidine.. It catalyses the reaction 2'-deoxyribonucleotide-(2'-deoxyribose 5'-phosphate)-2'-deoxyribonucleotide-DNA = a 3'-end 2'-deoxyribonucleotide-(2,3-dehydro-2,3-deoxyribose 5'-phosphate)-DNA + a 5'-end 5'-phospho-2'-deoxyribonucleoside-DNA + H(+). Functionally, involved in base excision repair of DNA damaged by oxidation or by mutagenic agents. Acts as a DNA glycosylase that recognizes and removes damaged bases. Has a preference for oxidized purines, such as 7,8-dihydro-8-oxoguanine (8-oxoG). Has AP (apurinic/apyrimidinic) lyase activity and introduces nicks in the DNA strand. Cleaves the DNA backbone by beta-delta elimination to generate a single-strand break at the site of the removed base with both 3'- and 5'-phosphates. This chain is Formamidopyrimidine-DNA glycosylase, found in Cereibacter sphaeroides (strain ATCC 17029 / ATH 2.4.9) (Rhodobacter sphaeroides).